The chain runs to 116 residues: Large ribosomal subunit protein uL24 (116 aa).

Residues 1–21 (MATNNGAGKARHKFHVKKGDT) are disordered.

This sequence belongs to the universal ribosomal protein uL24 family. As to quaternary structure, part of the 50S ribosomal subunit.

Functionally, one of two assembly initiator proteins, it binds directly to the 5'-end of the 23S rRNA, where it nucleates assembly of the 50S subunit. Its function is as follows. One of the proteins that surrounds the polypeptide exit tunnel on the outside of the subunit. This chain is Large ribosomal subunit protein uL24, found in Gloeobacter violaceus (strain ATCC 29082 / PCC 7421).